A 234-amino-acid polypeptide reads, in one-letter code: GTP cyclohydrolase 1 type 2 homolog (234 aa).

Residues histidine 61, histidine 62, aspartate 80, histidine 195, and glutamate 199 each coordinate a divalent metal cation.

The protein belongs to the GTP cyclohydrolase I type 2/NIF3 family. Homohexamer.

The chain is GTP cyclohydrolase 1 type 2 homolog from Methanothermobacter thermautotrophicus (strain ATCC 29096 / DSM 1053 / JCM 10044 / NBRC 100330 / Delta H) (Methanobacterium thermoautotrophicum).